The following is a 243-amino-acid chain: MNRLQAKKAVNVSRHEQKRIRYKLTPEEVKAERKERKRRAAIQRAEKKLIRAKGEALVAFQAVSNPSCNFLVIDFEAYEFNQKIITEAGITMRINGEWDYHHYRIKNFLHLRNGRFVPDEADNFQFGDSKIVTKIAFISILKKILKTPNLHLVGHGVENEIKYANVLGIPIPKDVTVLDTQNVFSFFQSLFLKEISNSNNISLAKMLTHLNIRAFCLHNAGNDARYTSEALREMTNKFTLSNF.

The protein localises to the nucleus. It is found in the nucleolus. This is an uncharacterized protein from Schizosaccharomyces pombe (strain 972 / ATCC 24843) (Fission yeast).